The following is a 491-amino-acid chain: MRLPWVIFCTVLLLIFTNNSNADIPGCNYYDTVDISYIERQNDSYLYDDIEIPASLTGYYEFRQFGDGSITPIEKHLRACVCSVRPCIRICCPAKNFLANGKCDDGLKEELARFKPYIYFTYMDLQARVPLTDMAIIRDEFFDCDEMIYISDFNYFLEEVSIQIFNKCGLIVWFQDGKFWVTVDLFMEKQDYCLYRHNFDSDFPKSMWIIRHRCTSHISPGSLEILIITMICFVLTIAVYLYIKKLRNVTGKCIVCCIVSRFIQCLIMILDHLNLLNGICSPAGYSSHFFRMASNLWLSVISYHTWKVLTSLNRVDPNYRFLRYNAFVWSTAAIMTGSIYIVNQIWENDPSKWNWLPLVGFIRCSVKDWHPSVWIYISGPSLALSTFNVAMFALTAIYIRKVKGGINKFTNEEEGRINCINFDSQTYLQFLRLSIVMGLTWIFNVIPYSARLHIFWEWVGIISEYFHSAFGIVLFVLLVLKRSTWTLMMDS.

Positions 1-22 (MRLPWVIFCTVLLLIFTNNSNA) are cleaved as a signal peptide. N-linked (GlcNAc...) asparagine glycans are attached at residues asparagine 18 and asparagine 42. Topologically, residues 23-167 (DIPGCNYYDT…EEVSIQIFNK (145 aa)) are extracellular. Disulfide bonds link cysteine 27-cysteine 80, cysteine 82-cysteine 87, and cysteine 92-cysteine 103. A helical membrane pass occupies residues 168–188 (CGLIVWFQDGKFWVTVDLFME). Topologically, residues 189 to 222 (KQDYCLYRHNFDSDFPKSMWIIRHRCTSHISPGS) are cytoplasmic. The helical transmembrane segment at 223–243 (LEILIITMICFVLTIAVYLYI) threads the bilayer. Over 244 to 252 (KKLRNVTGK) the chain is Extracellular. The N-linked (GlcNAc...) asparagine glycan is linked to asparagine 248. Residues 253–273 (CIVCCIVSRFIQCLIMILDHL) traverse the membrane as a helical segment. At 274–325 (NLLNGICSPAGYSSHFFRMASNLWLSVISYHTWKVLTSLNRVDPNYRFLRYN) the chain is on the cytoplasmic side. A helical transmembrane segment spans residues 326 to 346 (AFVWSTAAIMTGSIYIVNQIW). Residues 347–372 (ENDPSKWNWLPLVGFIRCSVKDWHPS) are Extracellular-facing. A helical transmembrane segment spans residues 373-393 (VWIYISGPSLALSTFNVAMFA). The Cytoplasmic segment spans residues 394 to 434 (LTAIYIRKVKGGINKFTNEEEGRINCINFDSQTYLQFLRLS). The helical transmembrane segment at 435–455 (IVMGLTWIFNVIPYSARLHIF) threads the bilayer. Topologically, residues 456–458 (WEW) are extracellular. The chain crosses the membrane as a helical span at residues 459–479 (VGIISEYFHSAFGIVLFVLLV). Over 480 to 491 (LKRSTWTLMMDS) the chain is Cytoplasmic.

Belongs to the G-protein coupled receptor 2 family. Mth subfamily.

The protein resides in the cell membrane. The protein is Probable G-protein coupled receptor Mth-like 7 (mthl7) of Drosophila melanogaster (Fruit fly).